A 352-amino-acid polypeptide reads, in one-letter code: Glycerol-3-phosphate dehydrogenase [NAD(P)+] (352 aa).

3 residues coordinate NADPH: Trp-11, Arg-37, and Lys-112. Positions 112, 153, and 155 each coordinate sn-glycerol 3-phosphate. NADPH is bound at residue Ala-157. Sn-glycerol 3-phosphate is bound by residues Lys-208, Asp-261, Ser-271, Arg-272, and Asn-273. The Proton acceptor role is filled by Lys-208. Arg-272 is a binding site for NADPH. NADPH is bound by residues Val-296 and Glu-298.

Belongs to the NAD-dependent glycerol-3-phosphate dehydrogenase family.

It localises to the cytoplasm. The catalysed reaction is sn-glycerol 3-phosphate + NAD(+) = dihydroxyacetone phosphate + NADH + H(+). The enzyme catalyses sn-glycerol 3-phosphate + NADP(+) = dihydroxyacetone phosphate + NADPH + H(+). Its pathway is membrane lipid metabolism; glycerophospholipid metabolism. Functionally, catalyzes the reduction of the glycolytic intermediate dihydroxyacetone phosphate (DHAP) to sn-glycerol 3-phosphate (G3P), the key precursor for phospholipid synthesis. The polypeptide is Glycerol-3-phosphate dehydrogenase [NAD(P)+] (Polaromonas naphthalenivorans (strain CJ2)).